Here is a 453-residue protein sequence, read N- to C-terminus: Charged multivesicular body protein 7 (453 aa).

Positions 1–22 are disordered; that stretch reads MWSPEREAEAPAGGDPAGLLPP. A compositionally biased stretch (low complexity) spans 10-22; it reads APAGGDPAGLLPP. S232 bears the Phosphoserine mark. Residues 243-312 are a coiled coil; the sequence is QLMQSEQLLS…DTVQGILDRI (70 aa). Over residues 392–403 the composition is skewed to basic and acidic residues; it reads TKEPLDLPDNPR. 2 disordered regions span residues 392 to 417 and 431 to 453; these read TKEP…PRIS and SEGG…LKPL. Residue T408 is modified to Phosphothreonine. Phosphoserine is present on residues S410, S417, S431, and S441.

The protein belongs to the SNF7 family. As to quaternary structure, interacts with CHMP4B, but not with VPS25. Interacts with LEMD2 (via C-terminus).

Its subcellular location is the cytoplasm. The protein localises to the nucleus envelope. In terms of biological role, ESCRT-III-like protein required to recruit the ESCRT-III complex to the nuclear envelope (NE) during late anaphase. Together with SPAST, the ESCRT-III complex promotes NE sealing and mitotic spindle disassembly during late anaphase. Recruited to the reforming NE during anaphase by LEMD2. Plays a role in the endosomal sorting pathway. The chain is Charged multivesicular body protein 7 (CHMP7) from Homo sapiens (Human).